A 204-amino-acid chain; its full sequence is B9 domain-containing protein 1 (204 aa).

In terms of domain architecture, C2 B9-type spans phenylalanine 9–threonine 127.

It belongs to the B9D family. In terms of assembly, part of the tectonic-like complex (also named B9 complex).

It is found in the cytoplasm. It localises to the cytoskeleton. The protein localises to the cilium basal body. In terms of biological role, component of the tectonic-like complex, a complex localized at the transition zone of primary cilia and acting as a barrier that prevents diffusion of transmembrane proteins between the cilia and plasma membranes. Required for ciliogenesis and sonic hedgehog/SHH signaling. The protein is B9 domain-containing protein 1 (B9d1) of Mus musculus (Mouse).